The chain runs to 550 residues: Cyclopentanone 1,2-monooxygenase (550 aa).

FAD contacts are provided by residues 31-32 (FT), Asp51, Trp60, Asp71, Tyr77, and Val123.

It belongs to the FAD-binding monooxygenase family. In terms of assembly, homotetramer. It depends on FAD as a cofactor.

It carries out the reaction cyclopentanone + NADPH + O2 + H(+) = 5-valerolactone + NADP(+) + H2O. The protein operates within alcohol metabolism; cyclopentanol degradation; 5-valerolactone from cyclopentanol: step 2/2. Its function is as follows. Catalyzes a Baeyer-Villiger oxidation reaction, i.e. the insertion of an oxygen atom into a carbon-carbon bond adjacent to a carbonyl, which converts ketones to esters or lactones using NADPH as an electron donor. Converts cyclopentanone to 5-valerolactone, a step in the degradation pathway of cyclopentanol. Besides cycloalkanones, can also act on methylated and other alkylated cycloalkanones, and on methylated cycloalkenones, with high enantioselectivity in some cases. Cannot use NADH instead of NADPH. The polypeptide is Cyclopentanone 1,2-monooxygenase (cpnB) (Comamonas sp. (strain NCIMB 9872)).